The following is a 209-amino-acid chain: Ferritin heavy chain (209 aa).

The first 27 residues, 1–27, serve as a signal peptide directing secretion; it reads MMKSVFFGVVAITVAILSIYQETAQAQ. The 154-residue stretch at 40–193 folds into the Ferritin-like diiron domain; it reads DSVDDQCLAA…EKIATLKKMK (154 aa). 5 residues coordinate Fe cation: Glu57, Glu92, His95, Glu140, and Gln175.

This sequence belongs to the ferritin family. As to quaternary structure, oligomer of 24 subunits. There are two types of subunits: L (light) chain and H (heavy) chain. The functional molecule forms a roughly spherical shell with a diameter of 12 nm and contains a central cavity into which the insoluble mineral iron core is deposited.

Its subcellular location is the secreted. The protein resides in the cytoplasm. The catalysed reaction is 4 Fe(2+) + O2 + 4 H(+) = 4 Fe(3+) + 2 H2O. Functionally, stores iron in a soluble, non-toxic, readily available form. Important for iron homeostasis. Has ferroxidase activity. Iron is taken up in the ferrous form and deposited as ferric hydroxides after oxidation. The polypeptide is Ferritin heavy chain (FERH) (Aedes aegypti (Yellowfever mosquito)).